The chain runs to 161 residues: Endoribonuclease YbeY (161 aa).

His120, His124, and Asp130 together coordinate Zn(2+).

Belongs to the endoribonuclease YbeY family. The cofactor is Zn(2+).

It localises to the cytoplasm. Functionally, single strand-specific metallo-endoribonuclease involved in late-stage 70S ribosome quality control and in maturation of the 3' terminus of the 16S rRNA. This chain is Endoribonuclease YbeY, found in Chlamydia muridarum (strain MoPn / Nigg).